The following is a 141-amino-acid chain: Putative pre-16S rRNA nuclease (141 aa).

This sequence belongs to the YqgF nuclease family.

It localises to the cytoplasm. Could be a nuclease involved in processing of the 5'-end of pre-16S rRNA. This Acetivibrio thermocellus (strain ATCC 27405 / DSM 1237 / JCM 9322 / NBRC 103400 / NCIMB 10682 / NRRL B-4536 / VPI 7372) (Clostridium thermocellum) protein is Putative pre-16S rRNA nuclease.